The following is a 1468-amino-acid chain: Histone-lysine N-methyltransferase, H3 lysine-4 specific (1468 aa).

Over residues 1–11 the composition is skewed to polar residues; it reads MPYSSQQNGYT. Disordered stretches follow at residues 1–439, 636–737, 848–884, 986–1103, and 1141–1162; these read MPYS…RSFG, EHKL…EEYD, SAPSQHAPSQQIRTPSGKHASVPLSMPAPPKQERKAI, AGAH…TGEE, and PPEAVVEADQGSETATPETDVP. Over residues 12–26 the composition is skewed to low complexity; the sequence is SASTSRLSEQTSSHS. Basic and acidic residues-rich tracts occupy residues 28-40, 46-89, 99-109, 120-136, 146-166, and 174-215; these read SSREDRHLTEKGR, EARH…DHWR, PRDDRRDEARN, PEHSTSRLRHRSPESAH, LDSKPDRGGDRKTGEALDSGR, and YEYD…RDDS. The span at 225-235 shows a compositional bias: basic residues; sequence RRSRSRSRSRS. 2 stretches are compositionally biased toward basic and acidic residues: residues 236-287 and 294-305; these read RSRD…EHST and EDSKDLRHESQR. 2 stretches are compositionally biased toward polar residues: residues 306–315 and 366–376; these read RVSASVQSAS and SAPNGSATAPS. Basic and acidic residues predominate over residues 396-405; the sequence is PTREKAEEAR. Residues 406–416 show a composition bias toward low complexity; that stretch reads TSSTRRPSSQT. Over residues 417–426 the composition is skewed to polar residues; sequence NDNVNNSRDP. 2 stretches are compositionally biased toward low complexity: residues 650–662 and 680–694; these read AAASSSPATPSTT and PAAPSPSYASSPASA. The segment covering 713 to 722 has biased composition (basic and acidic residues); it reads SSYEESRKLA. Residues 849–861 are compositionally biased toward polar residues; the sequence is APSQHAPSQQIRT. A compositionally biased stretch (basic residues) spans 1012–1024; the sequence is KKKRGHTHRSKVH. Over residues 1072 to 1085 the composition is skewed to acidic residues; sequence SDAEAGTDDVDSTE. Over residues 1086–1097 the composition is skewed to polar residues; the sequence is TDALSRSVSASV. Positions 1293 to 1298 match the RxxxRR motif motif; it reads RADSRR. Residues 1327–1444 enclose the SET domain; sequence KQLKFAKSPI…AGEELTYDYK (118 aa). Tyr-1443 contributes to the S-adenosyl-L-methionine binding site. A Post-SET domain is found at 1453–1468; that stretch reads DAIPCLCGSPGCRRFL.

It belongs to the class V-like SAM-binding methyltransferase superfamily. As to quaternary structure, component of the Set1C/COMPASS complex.

Its subcellular location is the nucleus. It localises to the chromosome. The catalysed reaction is L-lysyl(4)-[histone H3] + 3 S-adenosyl-L-methionine = N(6),N(6),N(6)-trimethyl-L-lysyl(4)-[histone H3] + 3 S-adenosyl-L-homocysteine + 3 H(+). It carries out the reaction N(6)-methyl-L-lysyl(4)-[histone H3] + S-adenosyl-L-methionine = N(6),N(6)-dimethyl-L-lysyl(4)-[histone H3] + S-adenosyl-L-homocysteine + H(+). It catalyses the reaction N(6),N(6)-dimethyl-L-lysyl(4)-[histone H3] + S-adenosyl-L-methionine = N(6),N(6),N(6)-trimethyl-L-lysyl(4)-[histone H3] + S-adenosyl-L-homocysteine + H(+). Functionally, catalytic component of the COMPASS (Set1C) complex that specifically mono-, di- and trimethylates histone H3 to form H3K4me1/2/3. Binds RNAs which might negatively affect its histone methyltransferase activity. COMPASS recognizes ubiquitinated H2B on one face of the nucleosome which stimulates the methylation of H3 on the opposing face. In Mycosarcoma maydis (Corn smut fungus), this protein is Histone-lysine N-methyltransferase, H3 lysine-4 specific (SET1).